We begin with the raw amino-acid sequence, 360 residues long: Peptide chain release factor 1 (360 aa).

Gln235 carries the post-translational modification N5-methylglutamine. The segment at 285 to 311 is disordered; that stretch reads KRQQAQASERRNLLGSGDRSDRHRTYN. Residues 292–308 show a composition bias toward basic and acidic residues; that stretch reads SERRNLLGSGDRSDRHR.

It belongs to the prokaryotic/mitochondrial release factor family. Post-translationally, methylated by PrmC. Methylation increases the termination efficiency of RF1.

The protein localises to the cytoplasm. Functionally, peptide chain release factor 1 directs the termination of translation in response to the peptide chain termination codons UAG and UAA. The sequence is that of Peptide chain release factor 1 from Hamiltonella defensa subsp. Acyrthosiphon pisum (strain 5AT).